Here is a 950-residue protein sequence, read N- to C-terminus: Sodium/calcium exchanger Calx (950 aa).

Positions Met1–Ala22 are cleaved as a signal peptide. At Gln23–Arg120 the chain is on the extracellular side. Asn39, Asn47, and Asn114 each carry an N-linked (GlcNAc...) asparagine glycan. Residues Leu121–Ile141 form a helical membrane-spanning segment. Over Ala142–Thr179 the chain is Cytoplasmic. Residues Val180–Ile200 form a helical membrane-spanning segment. Residues Glu201–Thr216 lie on the Extracellular side of the membrane. The chain crosses the membrane as a helical span at residues Ile217 to Pro237. Residues Ala238–Ser257 lie on the Cytoplasmic side of the membrane. Transmembrane regions (helical) follow at residues Val258–Val278 and Trp279–Glu299. Over Arg300–Ser749 the chain is Cytoplasmic. Residues Arg301 to Gly318 are corresponds to the exchanger inhibitory peptide (XIP) found in other sodium/calcium exchange proteins and thought to be involved in calmodulin binding. A Calx-beta 1 domain is found at Asp440–Asp551. Residues Glu455, Asp490, Asp515, Asp516, Val518, Glu520, Glu523, Asp550, Asp551, and Asp552 each coordinate Ca(2+). Residues Gly555–Glu694 enclose the Calx-beta 2 domain. A helical transmembrane segment spans residues Cys750–Pro770. The Extracellular portion of the chain corresponds to Pro771–Cys775. A helical transmembrane segment spans residues Gly776 to Gly796. Residues Asp797–Thr813 lie on the Cytoplasmic side of the membrane. A helical transmembrane segment spans residues Ala814–Ala834. Over Lys835–Thr848 the chain is Extracellular. The N-linked (GlcNAc...) asparagine glycan is linked to Asn846. Residues Gly849–Tyr869 traverse the membrane as a helical segment. The Cytoplasmic portion of the chain corresponds to His870–Thr883. A helical membrane pass occupies residues Ile884 to Phe904. The Extracellular segment spans residues Arg905–Tyr923. Residues Ile924 to Ala944 form a helical membrane-spanning segment. The Cytoplasmic segment spans residues Tyr945–Val950.

This sequence belongs to the Ca(2+):cation antiporter (CaCA) (TC 2.A.19) family. SLC8 subfamily. In terms of tissue distribution, ubiquitously expressed with higher expression in head compared to body (at protein level). Enriched in photoreceptor cells of the eye (at protein level). In the adult head, expressed in retina, optic ganglia and all neuronal tissues.

The protein localises to the cell membrane. The protein resides in the cell projection. It is found in the rhabdomere membrane. The enzyme catalyses Ca(2+)(in) + 3 Na(+)(out) = Ca(2+)(out) + 3 Na(+)(in). Its activity is regulated as follows. Activated by a Na(+) electrochemical gradient but also undergoes Na(2+)-dependent inactivation. Inhibited by micromolar levels of cytoplasmic Ca(2+), which is the opposite of most characterized mammalian homologs. With respect to regulation, exhibits greater extent of inhibition by Ca(2+) than isoform D/1.2. Exhibits greater Na(2+)-dependent inactivation than isoform A/1.1, probably due to greater stability of the inactive Na(2+)-bound form. Its function is as follows. Na(+)/Ca(2+) antiporter that couples the energy of a Na(+) electrochemical gradient to the movement of Ca(2+) against an electrochemical gradient across a membrane, which contributes to the regulation of cytoplasmic Ca(2+) levels. Mediates Na(+)/Ca(2+) exchange in photoreceptor cells and involved in controlling Ca(2+) levels during phototransduction, affecting magnitude of the photoresponse, activation kinetics, signal amplification, response termination, and light adaptation. Light induced depolarization of photoreceptor cells, resulting in Na(+) and Ca(2+) entry through trp/transient receptor potential protein channels, is essential for photoreceptor cell function but may result in toxic levels of cytoplasmic Ca(2+). Na(+)/Ca(2+) antiporter regulation of Ca(2+) levels protects photoreceptor cells from light-dependent retinal degeneration. This chain is Sodium/calcium exchanger Calx, found in Drosophila melanogaster (Fruit fly).